The following is a 592-amino-acid chain: MNLKTGRVLKISGPLVVAEGMEEANIYDVVKVGEKRLIGEIIEMREDRASIQVYEETAGLAPGDPVITTGEPLSVELGPGLIEAMFDGIQRPLNAIKAKAGDFITRGVEVHSLDRDRKWHFTPVKKVGDTVEAGDVIGIVQETSIVEHKIMVPYGIKGTIETIEEGDFTVVDTVAKVKDKDKVSDLIMMQKWPVRRGRPYGRKLNPVEPMITGQRVIDTFFPVTKGGTACVPGPFGSGKTVVQHQLAKWADAQIVVYIGCGERGNEMTDVLNEFPELKDPKTGEPLMKRTVLIANTSNMPVAAREASIYTGITIGEYFRDMGYSVALMADSTSRWAEALREMSGRLEEMPGDEGYPAYLGSRAADFYERAGKVLSLGSEGREGALTVIGAVSPPGGDLSEPVTQATLRIVKVFWGLDSQLAYRRHFPAINWLNSYSLYLEKISPWMDENVASDWTALRTRAMSLLQEEANLEEIVRLVGIDALSEKDRLKLEVAKSLREDYLQQNAFHEVDTYASLEKQYKMLKLVLFFYDETQRALNAGIYLKELLDLEVRDKIARAKYISEESIENIDAIFNELSEVIDQLISKGGIMNA.

Position 233–240 (233–240 (GPFGSGKT)) interacts with ATP.

The protein belongs to the ATPase alpha/beta chains family.

It carries out the reaction ATP + H2O + 4 H(+)(in) = ADP + phosphate + 5 H(+)(out). In terms of biological role, produces ATP from ADP in the presence of a proton gradient across the membrane. The V-type alpha chain is a catalytic subunit. This is V-type ATP synthase alpha chain from Clostridium botulinum (strain Loch Maree / Type A3).